Here is a 184-residue protein sequence, read N- to C-terminus: ATP synthase subunit delta (184 aa).

The protein belongs to the ATPase delta chain family. As to quaternary structure, F-type ATPases have 2 components, F(1) - the catalytic core - and F(0) - the membrane proton channel. F(1) has five subunits: alpha(3), beta(3), gamma(1), delta(1), epsilon(1). CF(0) has four main subunits: a(1), b(1), b'(1) and c(10-14). The alpha and beta chains form an alternating ring which encloses part of the gamma chain. F(1) is attached to F(0) by a central stalk formed by the gamma and epsilon chains, while a peripheral stalk is formed by the delta, b and b' chains.

It is found in the cellular thylakoid membrane. F(1)F(0) ATP synthase produces ATP from ADP in the presence of a proton or sodium gradient. F-type ATPases consist of two structural domains, F(1) containing the extramembraneous catalytic core and F(0) containing the membrane proton channel, linked together by a central stalk and a peripheral stalk. During catalysis, ATP synthesis in the catalytic domain of F(1) is coupled via a rotary mechanism of the central stalk subunits to proton translocation. Functionally, this protein is part of the stalk that links CF(0) to CF(1). It either transmits conformational changes from CF(0) to CF(1) or is implicated in proton conduction. The sequence is that of ATP synthase subunit delta from Synechococcus sp. (strain PCC 6716).